We begin with the raw amino-acid sequence, 98 residues long: Integration host factor subunit beta (98 aa).

Belongs to the bacterial histone-like protein family. As to quaternary structure, heterodimer of an alpha and a beta chain.

This protein is one of the two subunits of integration host factor, a specific DNA-binding protein that functions in genetic recombination as well as in transcriptional and translational control. This is Integration host factor subunit beta from Gluconacetobacter diazotrophicus (strain ATCC 49037 / DSM 5601 / CCUG 37298 / CIP 103539 / LMG 7603 / PAl5).